Here is a 156-residue protein sequence, read N- to C-terminus: H/ACA ribonucleoprotein complex subunit NHP2 (156 aa).

The protein belongs to the eukaryotic ribosomal protein eL8 family. Component of the small nucleolar ribonucleoprotein particles containing H/ACA-type snoRNAs (H/ACA snoRNPs). The protein component of the H/ACA snoRNP contains CBF5, GAR1, NHP2 and NOP10. The complex contains a stable core composed of CBF5 and NOP10, to which GAR1 and NHP2 subsequently bind. Interacts with SHQ1. Interacts with NAF1.

It localises to the nucleus. Its subcellular location is the nucleolus. Functionally, non-catalytic component of the H/ACA small nucleolar ribonucleoprotein (H/ACA snoRNP), which catalyzes pseudouridylation of rRNA and is required for ribosome biogenesis. This involves the isomerization of uridine such that the ribose is subsequently attached to C5, instead of the normal N1. Pseudouridine ('psi') residues may serve to stabilize the conformation of rRNAs. The H/ACA snoRNP complex also mediates pseudouridylation of other types of RNAs. The H/ACA snoRNP complex mediates pseudouridylation at position 93 in U2 snRNA. Essential for growth. Directly binds H/ACA snoRNAs. The protein is H/ACA ribonucleoprotein complex subunit NHP2 (NHP2) of Saccharomyces cerevisiae (strain ATCC 204508 / S288c) (Baker's yeast).